A 126-amino-acid chain; its full sequence is UPF0102 protein BCAN_A0183 (126 aa).

Belongs to the UPF0102 family.

The polypeptide is UPF0102 protein BCAN_A0183 (Brucella canis (strain ATCC 23365 / NCTC 10854 / RM-666)).